The following is a 134-amino-acid chain: Putative pre-16S rRNA nuclease (134 aa).

Belongs to the YqgF nuclease family.

The protein localises to the cytoplasm. Functionally, could be a nuclease involved in processing of the 5'-end of pre-16S rRNA. The protein is Putative pre-16S rRNA nuclease of Helicobacter pylori (strain ATCC 700392 / 26695) (Campylobacter pylori).